The sequence spans 303 residues: MSGGQDLQLPPGFRFHPTDEELVMHYLCRRCAGLPIAVPIIAEIDLYKFDPWQLPRMALYGEKEWYFFSPRDRKYPNGSRPNRAAGSGYWKATGADKPVGSPKPVAIKKALVFYAGKAPKGEKTNWIMHEYRLADVDRSARKKNSLRLDDWVLCRIYNKKGGLEKPPAAAVAAAGMVSSGGGVQRKPMVGVNAAVSSPPEQKPVVAGPAFPDLAAYYDRPSDSMPRLHADSSCSEQVLSPEFACEVQSQPKISEWERTFATVGPINPAASILDPAGSGGLGGLGGGGSDPLLQDILMYWGKPF.

The NAC domain occupies 9–159 (LPPGFRFHPT…DWVLCRIYNK (151 aa)).

In terms of assembly, interacts with NAC071. In terms of tissue distribution, widely expressed.

Its subcellular location is the nucleus. In terms of biological role, transcription activator that binds to the promoter of the stress response gene LEA19. Involved in tolerance to abiotic stresses. Transcription activator involved in response to abiotic and biotic stresses. Involved in drought and salt stress responses, and defense response to the rice blast fungus. Transcription activator involved tolerance to cold and salt stresses. Transcription activator involved in tolerance to drought stress. Targets directly and activates genes involved in membrane modification, nicotianamine (NA) biosynthesis, glutathione relocation, accumulation of phosphoadenosine phosphosulfate and glycosylation in roots. Controls root growth at early vegetative stage through chromatin modification and histone lysine deacytaltion by HDAC1. In Oryza sativa subsp. japonica (Rice), this protein is NAC domain-containing protein 48.